The following is a 282-amino-acid chain: Undecaprenyl-diphosphatase (282 aa).

The next 5 membrane-spanning stretches (helical) occupy residues 96 to 116 (WMVI…KDII), 123 to 143 (MWIT…AEKW), 198 to 218 (FLLA…DAFA), 229 to 249 (QLAV…AWLL), and 260 to 280 (FAAY…TGML).

The protein belongs to the UppP family.

It localises to the cell membrane. It carries out the reaction di-trans,octa-cis-undecaprenyl diphosphate + H2O = di-trans,octa-cis-undecaprenyl phosphate + phosphate + H(+). Its function is as follows. Catalyzes the dephosphorylation of undecaprenyl diphosphate (UPP). Confers resistance to bacitracin. This chain is Undecaprenyl-diphosphatase, found in Corynebacterium diphtheriae (strain ATCC 700971 / NCTC 13129 / Biotype gravis).